We begin with the raw amino-acid sequence, 312 residues long: MRFEHKDILDMESLSVQDITMILDTAEGMKEISKRPVKKVPTLRGKTIVLLFQEPSTRTKSSFDIAAKRLSADSISLSKSTSSIVKGETLIDTARNLEAMNPDIIVLRHPSSGAPHLIAKHVNASVINAGDGIHAHPSQTLLDLMSVREKKGELQGLNISIVGDISHSRVARSNITGFTKMGANVTISAPATMIPRGIEALGCKVAPDMDSCIENADVIIMLRIQKERQENILFPTEREYAALFGLNAQRLKLAKPDVIVMHPGPLNRGVEISNQVADGRNSVILDQVTNGVAVRMALFYLVAGGSRNADTI.

Carbamoyl phosphate-binding residues include arginine 58 and threonine 59. Lysine 86 contributes to the L-aspartate binding site. Residues arginine 108, histidine 136, and glutamine 139 each coordinate carbamoyl phosphate. L-aspartate-binding residues include arginine 169 and arginine 223. Carbamoyl phosphate is bound by residues glycine 264 and proline 265.

It belongs to the aspartate/ornithine carbamoyltransferase superfamily. ATCase family. As to quaternary structure, heterododecamer (2C3:3R2) of six catalytic PyrB chains organized as two trimers (C3), and six regulatory PyrI chains organized as three dimers (R2).

The enzyme catalyses carbamoyl phosphate + L-aspartate = N-carbamoyl-L-aspartate + phosphate + H(+). It functions in the pathway pyrimidine metabolism; UMP biosynthesis via de novo pathway; (S)-dihydroorotate from bicarbonate: step 2/3. Catalyzes the condensation of carbamoyl phosphate and aspartate to form carbamoyl aspartate and inorganic phosphate, the committed step in the de novo pyrimidine nucleotide biosynthesis pathway. The protein is Aspartate carbamoyltransferase catalytic subunit of Desulforapulum autotrophicum (strain ATCC 43914 / DSM 3382 / VKM B-1955 / HRM2) (Desulfobacterium autotrophicum).